The primary structure comprises 500 residues: MSDQQLDPQALQQEENTLIALRKEKLAAGRAKGQAFPNDFRRDSYCNDLQKQYVDKTKEELAEAAIPVKVAGRIMLNRGSFMVIQDMTGRIQVYVNRKTLPEETLAEVKTWDLGDIIAAEGTLARSGKGDLYVEMTSVRLLTKSLRPLPDKHHGLTDTEQRYRQRYVDLIVNEEVRETFRVRSQVIAHIRSFLMKRDFLEVETPMLQTIPGGAAAKPFETHHNALDMEMFLRIAPELYLKRLVVGGFEKVFEINRNFRNEGVSTRHNPEFTMLEFYQAYADYEDNMDLTEELFRELAQLVLGSTDVPYGDKVFHFGEPFVRLSVFDSILKYNPELTVADLQDIDKARAIAKKAGAKVLGFEGLGKLQVMIFEELVEHKLEQPHFITQYPFEVSPLARRNDENPNVTDRFELFIGGREIANAYSELNDAEDQAERFQAQVADKDAGDDEAMHYDADFVRALEYGMPPTAGEGIGIDRLVMLLTDSPSIRDVILFPHMRPQA.

Residues glutamate 410 and glutamate 417 each coordinate Mg(2+).

Belongs to the class-II aminoacyl-tRNA synthetase family. In terms of assembly, homodimer. Mg(2+) is required as a cofactor.

Its subcellular location is the cytoplasm. It carries out the reaction tRNA(Lys) + L-lysine + ATP = L-lysyl-tRNA(Lys) + AMP + diphosphate. This chain is Lysine--tRNA ligase, found in Pseudomonas syringae pv. syringae (strain B728a).